Here is a 72-residue protein sequence, read N- to C-terminus: Exodeoxyribonuclease 7 small subunit (72 aa).

Belongs to the XseB family. Heterooligomer composed of large and small subunits.

It is found in the cytoplasm. The enzyme catalyses Exonucleolytic cleavage in either 5'- to 3'- or 3'- to 5'-direction to yield nucleoside 5'-phosphates.. Functionally, bidirectionally degrades single-stranded DNA into large acid-insoluble oligonucleotides, which are then degraded further into small acid-soluble oligonucleotides. In Chlamydia trachomatis serovar D (strain ATCC VR-885 / DSM 19411 / UW-3/Cx), this protein is Exodeoxyribonuclease 7 small subunit.